The chain runs to 600 residues: Beta-hexosaminidase (600 aa).

Positions 1 to 18 (MRISQICTVLSTVTSAVA) are cleaved as a signal peptide. Positions 19 to 96 (VGVNPLPAPR…PFPTPTAGAS (78 aa)) are excised as a propeptide. Residue Thr78 is glycosylated (O-linked (Man...) threonine). Residues Ser83 and Ser84 are each glycosylated (O-linked (Man...) serine). Active-site charge relay system residues include Asp222 and His275. Cys290 and Cys351 form a disulfide bridge. N-linked (HexNAc...) asparagine glycosylation occurs at Asn318. Glu346 (charge relay system) is an active-site residue. The N-linked (GlcNAc...) asparagine glycan is linked to Asn353. An N-linked (HexNAc...) asparagine glycan is attached at Asn387. The N-linked (GlcNAc...) asparagine glycan is linked to Asn428. Cysteines 448 and 483 form a disulfide. N-linked (GlcNAc...) asparagine glycosylation is found at Asn500 and Asn525. An intrachain disulfide couples Cys583 to Cys590.

This sequence belongs to the glycosyl hydrolase 20 family. Homodimer. Oligosaccharide moieties may also take part in the dimerization. Dimerization is a pH-dependent reversible process. The individual catalytic cores dimerize and the catalytic core of one subunit in the active dimer interacts with the propeptide of the second subunit. Post-translationally, the precursor of the propeptide is intracellularly processed in the endoplasmic reticulum by a dibasic peptidase, different from Kex2, removing Lys-97--Arg-101 from the precursor producing the activated propeptide. The propeptide binds non-covalently to the catalytic domain. Propeptide binding is necessary for full activation of the enzyme, dimerization of the catalytic domain and secretion of the active enzyme. In terms of processing, O-glycosylated. O-glycosylation (O-mannosylation) at the C-terminus of the propeptide is necessary for full enzyme activity. N-glycosylated. N-glycosylation of the catalytic domain increases the stability and solubility of the enzyme, especially at low pH. Contains high mannose-type (M4-M11) N-glycans at the C-terminus. N-glycan deglycosylation does not affect enzyme activity.

It is found in the secreted. The catalysed reaction is Hydrolysis of terminal non-reducing N-acetyl-D-hexosamine residues in N-acetyl-beta-D-hexosaminides.. Its activity is regulated as follows. Activated by non-covalent binding of the propeptide to the catalytic domain. The concentration of the propeptide is regulated in the endoplasmic reticulum and the propeptide thus regulates the amount of the active enzyme at various stages of the growth cycle. The dimeric enzyme has about half of the maximal activity in the presence of one bound propeptide, but is fully active with two bound O-glycosylated propeptides. Inhibited by N-acetylglucosamine (NAG)-thiazoline. In terms of biological role, selectively hydrolyzes GlcNAcbeta(1-&gt;4)GlcNAc (N,N'-diacetylchitobiose) and Gal-NAcbeta(1-&gt;4)GlcNAc, but not their C-2 epimers GlcNAcbeta(1-&gt;4)ManNAc or Gal-NAcbeta(1-&gt;4)ManNAc. However, hydrolyzes both GlcNAcbeta(1-&gt;6)GlcNAc and GlcNAcbeta(1-&gt;6)ManNAc. Part of the binary chitinolytic system. Involved in hydrolysis of chitobiose and higher chito-oligomers (produced from cell wall chitin by endochitinases), thus contributing to the formation of germ tubes, fruit-bodies and septa during hyphenation. Hydrolyzes synthetic substrate p-nitrophenyl-beta-N-acetyl-D-glucosaminide (pNP-GlcNAc). Hydrolyzes synthetic substrate p-nitrophenyl-beta-N-acetyl-D-galactosaminide (pNP-GalNAc). Hydrolyzes chromogenic substrate 4-nitrophenyl-2-acetamido-2-deoxyglucopyranoside. The chain is Beta-hexosaminidase from Aspergillus oryzae (Yellow koji mold).